We begin with the raw amino-acid sequence, 115 residues long: CRISPR-associated endoribonuclease Cas2 (115 aa).

D22 lines the Mg(2+) pocket.

Belongs to the CRISPR-associated endoribonuclease Cas2 protein family. In terms of assembly, homodimer, forms a heterotetramer with a Cas1 homodimer. Requires Mg(2+) as cofactor.

In terms of biological role, CRISPR (clustered regularly interspaced short palindromic repeat), is an adaptive immune system that provides protection against mobile genetic elements (viruses, transposable elements and conjugative plasmids). CRISPR clusters contain sequences complementary to antecedent mobile elements and target invading nucleic acids. CRISPR clusters are transcribed and processed into CRISPR RNA (crRNA). Functions as a ssRNA-specific endoribonuclease. Involved in the integration of spacer DNA into the CRISPR cassette. The chain is CRISPR-associated endoribonuclease Cas2 from Flavobacterium psychrophilum (strain ATCC 49511 / DSM 21280 / CIP 103535 / JIP02/86).